A 305-amino-acid chain; its full sequence is Homoserine O-acetyltransferase (305 aa).

Residue Cys-132 is the Acyl-thioester intermediate of the active site. Residues Lys-153 and Ser-181 each coordinate substrate. The active-site Proton acceptor is the His-221. Residue Glu-223 is part of the active site. Arg-235 serves as a coordination point for substrate.

Belongs to the MetA family.

The protein localises to the cytoplasm. It catalyses the reaction L-homoserine + acetyl-CoA = O-acetyl-L-homoserine + CoA. The protein operates within amino-acid biosynthesis; L-methionine biosynthesis via de novo pathway; O-acetyl-L-homoserine from L-homoserine: step 1/1. Transfers an acetyl group from acetyl-CoA to L-homoserine, forming acetyl-L-homoserine. This chain is Homoserine O-acetyltransferase, found in Leuconostoc mesenteroides subsp. mesenteroides (strain ATCC 8293 / DSM 20343 / BCRC 11652 / CCM 1803 / JCM 6124 / NCDO 523 / NBRC 100496 / NCIMB 8023 / NCTC 12954 / NRRL B-1118 / 37Y).